The sequence spans 424 residues: STAM-binding protein (424 aa).

Positions 1–127 (MSDHADVSLP…YEQYKERKKK (127 aa)) are interaction with CHMP3. Phosphoserine occurs at positions 2 and 48. The interval 227–231 (PAKPP) is interaction with STAM. Ser-243 carries the phosphoserine modification. One can recognise an MPN domain in the interval 257 to 388 (IVVPRNLCSE…LTDYGLQEIS (132 aa)). Zn(2+)-binding residues include His-335, His-337, Asp-348, His-350, Cys-390, His-396, and His-398. Residues 335-348 (HTHPTQTAFLSSVD) carry the JAMM motif motif.

It belongs to the peptidase M67C family. Interacts with STAM. Interacts with SMAD6 and SMAD7. Interacts with CHMP3; the interaction appears to relieve the autoinhibition of CHMP3. Interacts with SMURF2 and RNF11; this interaction promotes ubiquitination. The cofactor is Zn(2+). Post-translationally, phosphorylated after BMP type I receptor activation. In terms of processing, ubiquitinated by SMURF2 in the presence of RNF11.

The protein resides in the nucleus. Its subcellular location is the membrane. It is found in the cytoplasm. It localises to the early endosome. Inhibited by N-ethylmaleimide. Functionally, zinc metalloprotease that specifically cleaves 'Lys-63'-linked polyubiquitin chains. Does not cleave 'Lys-48'-linked polyubiquitin chains. Plays a role in signal transduction for cell growth and MYC induction mediated by IL-2 and GM-CSF. Potentiates BMP (bone morphogenetic protein) signaling by antagonizing the inhibitory action of SMAD6 and SMAD7. Has a key role in regulation of cell surface receptor-mediated endocytosis and ubiquitin-dependent sorting of receptors to lysosomes. Endosomal localization of STAMBP is required for efficient EGFR degradation but not for its internalization. Involved in the negative regulation of PI3K-AKT-mTOR and RAS-MAP signaling pathways. The sequence is that of STAM-binding protein (Stambp) from Rattus norvegicus (Rat).